A 167-amino-acid chain; its full sequence is NADH-quinone oxidoreductase subunit B (167 aa).

Residues C40, C41, C105, and C134 each coordinate [4Fe-4S] cluster.

Belongs to the complex I 20 kDa subunit family. NDH-1 is composed of 14 different subunits. Subunits NuoB, C, D, E, F, and G constitute the peripheral sector of the complex. The cofactor is [4Fe-4S] cluster.

It localises to the cell inner membrane. It carries out the reaction a quinone + NADH + 5 H(+)(in) = a quinol + NAD(+) + 4 H(+)(out). Its function is as follows. NDH-1 shuttles electrons from NADH, via FMN and iron-sulfur (Fe-S) centers, to quinones in the respiratory chain. The immediate electron acceptor for the enzyme in this species is believed to be ubiquinone. Couples the redox reaction to proton translocation (for every two electrons transferred, four hydrogen ions are translocated across the cytoplasmic membrane), and thus conserves the redox energy in a proton gradient. This is NADH-quinone oxidoreductase subunit B from Campylobacter jejuni subsp. jejuni serotype O:2 (strain ATCC 700819 / NCTC 11168).